Consider the following 415-residue polypeptide: Histidine--tRNA ligase (415 aa).

The protein belongs to the class-II aminoacyl-tRNA synthetase family. In terms of assembly, homodimer.

It is found in the cytoplasm. The catalysed reaction is tRNA(His) + L-histidine + ATP = L-histidyl-tRNA(His) + AMP + diphosphate + H(+). In Rickettsia canadensis (strain McKiel), this protein is Histidine--tRNA ligase.